The primary structure comprises 32 residues: U5-ctenitoxin-Pn1a (32 aa).

Intrachain disulfides connect Cys3/Cys16, Cys9/Cys21, and Cys15/Cys30.

Expressed by the venom gland.

The protein localises to the secreted. In terms of biological role, blocks voltage-gated sodium channels (Nav). Causes tail erection, scratching and a reduction in mobility at a dose level of 1.40 mg/mouse. The chain is U5-ctenitoxin-Pn1a from Phoneutria nigriventer (Brazilian armed spider).